The sequence spans 226 residues: 1-hydroxy-2-glutathionyl-2-methyl-3-butene dehydrogenase (226 aa).

This sequence belongs to the short-chain dehydrogenases/reductases (SDR) family.

The enzyme catalyses 2-glutathionyl-2-methylbut-3-en-1-ol + 2 NAD(+) + H2O = 2-glutathionyl-2-methylbut-3-enoate + 2 NADH + 3 H(+). It carries out the reaction 2-glutathionyl-2-methylbut-3-en-1-ol + NAD(+) = 2-glutathionyl-2-methylbut-3-enal + NADH + H(+). The catalysed reaction is 2-glutathionyl-2-methylbut-3-enal + NAD(+) + H2O = 2-glutathionyl-2-methylbut-3-enoate + NADH + 2 H(+). Its function is as follows. Involved in isoprene degradation. Catalyzes the two-step NAD(+)-dependent oxidation of 2-glutathionyl-2-methylbut-3-en-1-ol (HGMB) to 2-glutathionyl-2-methylbut-3-enoate (GMBA). In Rhodococcus sp. (strain AD45), this protein is 1-hydroxy-2-glutathionyl-2-methyl-3-butene dehydrogenase.